The chain runs to 214 residues: Ribosomal RNA small subunit methyltransferase G (214 aa).

S-adenosyl-L-methionine contacts are provided by residues Gly56, Phe61, 107–108 (IE), and Arg125.

This sequence belongs to the methyltransferase superfamily. RNA methyltransferase RsmG family.

Its subcellular location is the cytoplasm. In terms of biological role, specifically methylates the N7 position of a guanine in 16S rRNA. This Syntrophomonas wolfei subsp. wolfei (strain DSM 2245B / Goettingen) protein is Ribosomal RNA small subunit methyltransferase G.